The chain runs to 202 residues: Riboflavin synthase (202 aa).

2 Lumazine-binding repeats span residues 1–101 (MFTG…MGGH) and 102–198 (LVFG…ARLA). 2,4-dihydroxypteridine-binding positions include 4-6 (GII), 47-49 (CLT), 66-68 (EAW), 105-107 (GHV), Lys-140, 149-151 (SLT), and 163-168 (LLIRHS).

Homotrimer.

The enzyme catalyses 2 6,7-dimethyl-8-(1-D-ribityl)lumazine + H(+) = 5-amino-6-(D-ribitylamino)uracil + riboflavin. The protein operates within cofactor biosynthesis; riboflavin biosynthesis; riboflavin from 2-hydroxy-3-oxobutyl phosphate and 5-amino-6-(D-ribitylamino)uracil: step 2/2. Its activity is regulated as follows. Is inhibited by riboflavin. Product inhibition may be the major mechanism by which RS regulates its enzymatic activity in vivo. Functionally, catalyzes the dismutation of two molecules of 6,7-dimethyl-8-ribityllumazine, resulting in the formation of riboflavin and 5-amino-6-(D-ribitylamino)uracil. This is Riboflavin synthase from Brucella abortus (strain 2308).